The primary structure comprises 507 residues: 3-oxosteroid 1-dehydrogenase (507 aa).

9-38 (DLLVVGSGGGALTGAYTAAAQGLTTIVLEK) is a binding site for FAD. The tract at residues 299 to 385 (GLVVDSPGSV…LPRPDYRPER (87 aa)) is disordered.

The protein belongs to the FAD-dependent oxidoreductase 2 family. 3-oxosteroid dehydrogenase subfamily. Requires FAD as cofactor.

The protein resides in the cell membrane. It carries out the reaction a 3-oxosteroid + A = a 3-oxo-Delta(1)-steroid + AH2. It functions in the pathway lipid metabolism; steroid degradation. Catalyzes the elimination of the C-1 and C-2 hydrogen atoms of the A-ring from the polycyclic ring structure of 3-ketosteroids. The chain is 3-oxosteroid 1-dehydrogenase from Rhodococcus opacus (Nocardia opaca).